Here is an 81-residue protein sequence, read N- to C-terminus: DNA-directed RNA polymerase subunit Rpo6 (81 aa).

This sequence belongs to the archaeal Rpo6/eukaryotic RPB6 RNA polymerase subunit family. In terms of assembly, part of the RNA polymerase complex.

It localises to the cytoplasm. The catalysed reaction is RNA(n) + a ribonucleoside 5'-triphosphate = RNA(n+1) + diphosphate. DNA-dependent RNA polymerase (RNAP) catalyzes the transcription of DNA into RNA using the four ribonucleoside triphosphates as substrates. In Thermofilum pendens (strain DSM 2475 / Hrk 5), this protein is DNA-directed RNA polymerase subunit Rpo6.